The sequence spans 321 residues: Chitinase-like protein 1 (321 aa).

The N-terminal stretch at 1–26 (MVTIRSGSIVILVLLAVSFLALVANG) is a signal peptide. Cysteines 42 and 55 form a disulfide. Asparagine 57 is a glycosylation site (N-linked (GlcNAc...) asparagine). Cysteine 157 and cysteine 167 are joined by a disulfide. 2 N-linked (GlcNAc...) asparagine glycosylation sites follow: asparagine 208 and asparagine 244. Cysteine 267 and cysteine 304 are disulfide-bonded. Residues 297–321 (GPNDELSCAEQKPFNPSTVPSSSSS) form a disordered region. A compositionally biased stretch (polar residues) spans 310-321 (FNPSTVPSSSSS).

The protein belongs to the glycosyl hydrolase 19 family. As to expression, mostly expressed in seedlings shoots and roots, stems, and flowers, and, to a lower extent, in flowers, mature leaves and roots.

Its subcellular location is the secreted. In terms of biological role, no chitinase activity. Essential for normal plant growth and development. Regulates cell expansion extent and differentiation at least in roots and hypocotyls. Prevents lignin accumulation in the pith. May modulate ethylene-mediated regulation during development. Probably required to establish thermotolerance acclimation. Plays a role for controlled anisotropic cell expansion in the regulation of waving during root gravitropism and thigmotropism. Involved in the root system architecture adaptation to multiple environmental conditions such as nitrate. Contributes to salt tolerance and possibly to drought by preventing the overaccumulation of sodium ions. This Arabidopsis thaliana (Mouse-ear cress) protein is Chitinase-like protein 1 (CTL1).